Here is a 223-residue protein sequence, read N- to C-terminus: Ribonuclease 3 (223 aa).

The RNase III domain occupies 4–127 (LENLQKLLGY…VMGAVYLEAG (124 aa)). Residue Glu40 participates in Mg(2+) binding. Asp44 is an active-site residue. Mg(2+)-binding residues include Asp113 and Glu116. Residue Glu116 is part of the active site. The region spanning 154–223 (DYKTALQEIT…AKIALEKMKK (70 aa)) is the DRBM domain.

The protein belongs to the ribonuclease III family. As to quaternary structure, homodimer. Requires Mg(2+) as cofactor.

Its subcellular location is the cytoplasm. It catalyses the reaction Endonucleolytic cleavage to 5'-phosphomonoester.. Digests double-stranded RNA. Involved in the processing of primary rRNA transcript to yield the immediate precursors to the large and small rRNAs (23S and 16S). Processes some mRNAs, and tRNAs when they are encoded in the rRNA operon. Processes pre-crRNA and tracrRNA of type II CRISPR loci if present in the organism. The chain is Ribonuclease 3 from Campylobacter curvus (strain 525.92).